Consider the following 157-residue polypeptide: 2-C-methyl-D-erythritol 2,4-cyclodiphosphate synthase (157 aa).

A divalent metal cation-binding residues include Asp-8 and His-10. 4-CDP-2-C-methyl-D-erythritol 2-phosphate-binding positions include 8–10 (DVH) and 34–35 (HS). His-42 contacts a divalent metal cation. Residues 56–58 (DIG), 61–65 (FPDTD), 100–106 (AQAPKMA), 132–135 (TTTE), Phe-139, and Arg-142 each bind 4-CDP-2-C-methyl-D-erythritol 2-phosphate.

The protein belongs to the IspF family. In terms of assembly, homotrimer. It depends on a divalent metal cation as a cofactor.

The enzyme catalyses 4-CDP-2-C-methyl-D-erythritol 2-phosphate = 2-C-methyl-D-erythritol 2,4-cyclic diphosphate + CMP. It functions in the pathway isoprenoid biosynthesis; isopentenyl diphosphate biosynthesis via DXP pathway; isopentenyl diphosphate from 1-deoxy-D-xylulose 5-phosphate: step 4/6. Its function is as follows. Involved in the biosynthesis of isopentenyl diphosphate (IPP) and dimethylallyl diphosphate (DMAPP), two major building blocks of isoprenoid compounds. Catalyzes the conversion of 4-diphosphocytidyl-2-C-methyl-D-erythritol 2-phosphate (CDP-ME2P) to 2-C-methyl-D-erythritol 2,4-cyclodiphosphate (ME-CPP) with a corresponding release of cytidine 5-monophosphate (CMP). The sequence is that of 2-C-methyl-D-erythritol 2,4-cyclodiphosphate synthase from Pseudomonas syringae pv. syringae (strain B728a).